Reading from the N-terminus, the 279-residue chain is MSRISTLFGKLLQNRRKALIPFITAGDPEPGMMVPLMHELVQAGADVIELGVPFSDPMADGPTIQRSSERALKHRVSLQDVLAMVGEFRESDSSTPVVLMGYANPVEAMGYDAFTARSKACGVDGVLIVDYPPEESVKWVEYLKRQNIAPIFLLSPTTPQQRVERVASLAEGYVYYVSLKGVTGSLHLDLHDVAEKLDGLRSRISIPIGVGFGIRDGATARAVAELADAVVVGSRIIEEIERSPKAEVLTNVHRLVKSLRIAIDAASPAPSAAVKLTHL.

Active-site proton acceptor residues include glutamate 49 and aspartate 60.

This sequence belongs to the TrpA family. Tetramer of two alpha and two beta chains.

The catalysed reaction is (1S,2R)-1-C-(indol-3-yl)glycerol 3-phosphate + L-serine = D-glyceraldehyde 3-phosphate + L-tryptophan + H2O. It participates in amino-acid biosynthesis; L-tryptophan biosynthesis; L-tryptophan from chorismate: step 5/5. Functionally, the alpha subunit is responsible for the aldol cleavage of indoleglycerol phosphate to indole and glyceraldehyde 3-phosphate. The chain is Tryptophan synthase alpha chain from Nitrosospira multiformis (strain ATCC 25196 / NCIMB 11849 / C 71).